The chain runs to 262 residues: Thiazole synthase (262 aa).

Lysine 104 serves as the catalytic Schiff-base intermediate with DXP. Residues glycine 165, 191–192, and 213–214 each bind 1-deoxy-D-xylulose 5-phosphate; these read AG and NT.

It belongs to the ThiG family. As to quaternary structure, homotetramer. Forms heterodimers with either ThiH or ThiS.

It is found in the cytoplasm. It catalyses the reaction [ThiS sulfur-carrier protein]-C-terminal-Gly-aminoethanethioate + 2-iminoacetate + 1-deoxy-D-xylulose 5-phosphate = [ThiS sulfur-carrier protein]-C-terminal Gly-Gly + 2-[(2R,5Z)-2-carboxy-4-methylthiazol-5(2H)-ylidene]ethyl phosphate + 2 H2O + H(+). It participates in cofactor biosynthesis; thiamine diphosphate biosynthesis. Catalyzes the rearrangement of 1-deoxy-D-xylulose 5-phosphate (DXP) to produce the thiazole phosphate moiety of thiamine. Sulfur is provided by the thiocarboxylate moiety of the carrier protein ThiS. In vitro, sulfur can be provided by H(2)S. In Alkalilimnicola ehrlichii (strain ATCC BAA-1101 / DSM 17681 / MLHE-1), this protein is Thiazole synthase.